We begin with the raw amino-acid sequence, 344 residues long: N-acetyl-gamma-glutamyl-phosphate reductase (344 aa).

Cysteine 147 is an active-site residue.

The protein belongs to the NAGSA dehydrogenase family. Type 1 subfamily.

It localises to the cytoplasm. The enzyme catalyses N-acetyl-L-glutamate 5-semialdehyde + phosphate + NADP(+) = N-acetyl-L-glutamyl 5-phosphate + NADPH + H(+). It functions in the pathway amino-acid biosynthesis; L-arginine biosynthesis; N(2)-acetyl-L-ornithine from L-glutamate: step 3/4. Its function is as follows. Catalyzes the NADPH-dependent reduction of N-acetyl-5-glutamyl phosphate to yield N-acetyl-L-glutamate 5-semialdehyde. The sequence is that of N-acetyl-gamma-glutamyl-phosphate reductase from Bacillus amyloliquefaciens (Bacillus velezensis).